Consider the following 391-residue polypeptide: MRELNDVYDVVVVGAGPGGSMASYASAKNGAKTLLIEKSQEIGEPVRCAEAIPSIEEFGLKPEPEFVRNIIKGGILFSPSGKKVTVTQDKAQGYVVERKIFDKYLAIRAAKAGAKVAVKTTAIGLERDGDYWNVIVEFLGEEYVIKTKVVIAADGVESNIAEYAGLKAKKKPLEICSCAEYEMTNVELLDKNMMEFYFGNEVAPGGYVWIFPKGETANVGLGVRDKKKKAIEYLEEFIENGLAKDRLKDATPIEFKVGGAPVSGPIEKTYTDGLLVVGDAAGQISPLTGGGIYLAMDCGLIAGEVASKAIKLNDWSEETLKEYERRWKEKHYEYLMSHLKYRKILEKMSDDELDALAEALGESLDGIDLKKFVKRIITKKPSLLKYFKDLL.

Positions 18, 37, 48, 49, 51, 98, 122, 279, 291, and 292 each coordinate FAD.

The protein belongs to the geranylgeranyl reductase family. DGGGPL reductase subfamily. The cofactor is FAD.

It carries out the reaction a 2,3-bis-O-phytanyl-sn-glycerol 1-phospholipid + 8 A = a 2,3-bis-O-(geranylgeranyl)-sn-glycerol 1-phospholipid + 8 AH2. The enzyme catalyses 2,3-bis-O-(phytanyl)-sn-glycerol 1-phosphate + 8 A = 2,3-bis-O-(geranylgeranyl)-sn-glycerol 1-phosphate + 8 AH2. It catalyses the reaction CDP-2,3-bis-O-(geranylgeranyl)-sn-glycerol + 8 AH2 = CDP-2,3-bis-O-(phytanyl)-sn-glycerol + 8 A. The catalysed reaction is archaetidylserine + 8 AH2 = 2,3-bis-O-phytanyl-sn-glycero-3-phospho-L-serine + 8 A. The protein operates within membrane lipid metabolism; glycerophospholipid metabolism. In terms of biological role, is involved in the reduction of 2,3-digeranylgeranylglycerophospholipids (unsaturated archaeols) into 2,3-diphytanylglycerophospholipids (saturated archaeols) in the biosynthesis of archaeal membrane lipids. Catalyzes the formation of archaetidic acid (2,3-di-O-phytanyl-sn-glyceryl phosphate) from 2,3-di-O-geranylgeranylglyceryl phosphate (DGGGP) via the hydrogenation of each double bond of the isoprenoid chains. Is also probably able to reduce double bonds of geranyl groups in CDP-2,3-bis-O-(geranylgeranyl)-sn-glycerol and archaetidylserine, thus acting at various stages in the biosynthesis of archaeal membrane lipids. This chain is Digeranylgeranylglycerophospholipid reductase, found in Methanocaldococcus jannaschii (strain ATCC 43067 / DSM 2661 / JAL-1 / JCM 10045 / NBRC 100440) (Methanococcus jannaschii).